Consider the following 312-residue polypeptide: Serpentine receptor class gamma-31 (312 aa).

7 helical membrane passes run 6 to 26 (LITQ…TVVF), 38 to 58 (FLKL…NFYI), 92 to 112 (FIFC…LTSI), 132 to 152 (TYIL…PLLV), 180 to 200 (FILV…IICW), 218 to 238 (LFLV…IAML), and 259 to 279 (LLSP…LIIF).

This sequence belongs to the nematode receptor-like protein srg family.

The protein resides in the membrane. The sequence is that of Serpentine receptor class gamma-31 (srg-31) from Caenorhabditis elegans.